Reading from the N-terminus, the 883-residue chain is Phosphoenolpyruvate carboxylase (883 aa).

Catalysis depends on residues His138 and Lys546.

Belongs to the PEPCase type 1 family. It depends on Mg(2+) as a cofactor.

The catalysed reaction is oxaloacetate + phosphate = phosphoenolpyruvate + hydrogencarbonate. Its function is as follows. Forms oxaloacetate, a four-carbon dicarboxylic acid source for the tricarboxylic acid cycle. This is Phosphoenolpyruvate carboxylase from Escherichia coli O45:K1 (strain S88 / ExPEC).